Consider the following 120-residue polypeptide: Small ribosomal subunit protein bS16 (120 aa).

Over residues 84 to 110 (KREVKSNPEKAKPGKRAQERAAEKAQK) the composition is skewed to basic and acidic residues. The segment at 84-120 (KREVKSNPEKAKPGKRAQERAAEKAQKAADAAAATAE) is disordered. The span at 111–120 (AADAAAATAE) shows a compositional bias: low complexity.

Belongs to the bacterial ribosomal protein bS16 family.

The chain is Small ribosomal subunit protein bS16 from Rhizobium rhizogenes (strain K84 / ATCC BAA-868) (Agrobacterium radiobacter).